We begin with the raw amino-acid sequence, 151 residues long: 3-hydroxyacyl-[acyl-carrier-protein] dehydratase FabZ (151 aa).

The active site involves histidine 53.

Belongs to the thioester dehydratase family. FabZ subfamily.

It is found in the cytoplasm. The catalysed reaction is a (3R)-hydroxyacyl-[ACP] = a (2E)-enoyl-[ACP] + H2O. Functionally, involved in unsaturated fatty acids biosynthesis. Catalyzes the dehydration of short chain beta-hydroxyacyl-ACPs and long chain saturated and unsaturated beta-hydroxyacyl-ACPs. This Erythrobacter litoralis (strain HTCC2594) protein is 3-hydroxyacyl-[acyl-carrier-protein] dehydratase FabZ.